The primary structure comprises 255 residues: uncharacterized protein (255 aa).

2 helical membrane-spanning segments follow: residues 2–22 (LLPAANVIMQLAVPGVGYGVL) and 168–188 (VASVAFLPWPLRAVAGPFNLF).

It is found in the cell membrane. This is an uncharacterized protein from Mycobacterium tuberculosis (strain ATCC 25618 / H37Rv).